Reading from the N-terminus, the 405-residue chain is Lipase lipl-1 (405 aa).

The N-terminal stretch at M1–G20 is a signal peptide. An N-linked (GlcNAc...) asparagine glycan is attached at N66. Residue S169 is the Nucleophile of the active site. N-linked (GlcNAc...) asparagine glycosylation occurs at N273. Residues D344 and H376 each act as charge relay system in the active site.

It belongs to the AB hydrolase superfamily. Lipase family.

The protein localises to the secreted. Its subcellular location is the lysosome lumen. Its function is as follows. Lipase that, together with lipl-3, plays a role in the response to nutrient deprivation by controlling lipid metabolism. Specifically, involved in the breakdown of lipids during lipophagy, a process during which lipids contained in lipid droplets that have been delivered to lysosomes by autophagy are degraded. This Caenorhabditis elegans protein is Lipase lipl-1.